The primary structure comprises 306 residues: Protoheme IX farnesyltransferase (306 aa).

The next 9 membrane-spanning stretches (helical) occupy residues 32-52 (VVQL…PGMP), 57-77 (WALM…AAAF), 108-128 (LLFS…WVNP), 129-149 (LTMW…TVIL), 157-177 (IVIG…AMTG), 183-203 (ALIL…ALAL), 230-250 (VFLY…YGMS), 252-272 (WIYL…GFRL), and 285-305 (FRFS…DHYL).

The protein belongs to the UbiA prenyltransferase family. Protoheme IX farnesyltransferase subfamily.

Its subcellular location is the cell inner membrane. It catalyses the reaction heme b + (2E,6E)-farnesyl diphosphate + H2O = Fe(II)-heme o + diphosphate. It participates in porphyrin-containing compound metabolism; heme O biosynthesis; heme O from protoheme: step 1/1. Functionally, converts heme B (protoheme IX) to heme O by substitution of the vinyl group on carbon 2 of heme B porphyrin ring with a hydroxyethyl farnesyl side group. The chain is Protoheme IX farnesyltransferase from Acidovorax ebreus (strain TPSY) (Diaphorobacter sp. (strain TPSY)).